An 83-amino-acid polypeptide reads, in one-letter code: Small ribosomal subunit protein uS17 (83 aa).

The protein belongs to the universal ribosomal protein uS17 family. In terms of assembly, part of the 30S ribosomal subunit.

Functionally, one of the primary rRNA binding proteins, it binds specifically to the 5'-end of 16S ribosomal RNA. This chain is Small ribosomal subunit protein uS17, found in Aliarcobacter butzleri (strain RM4018) (Arcobacter butzleri).